We begin with the raw amino-acid sequence, 133 residues long: Large ribosomal subunit protein bL19 (133 aa).

Belongs to the bacterial ribosomal protein bL19 family.

Functionally, this protein is located at the 30S-50S ribosomal subunit interface and may play a role in the structure and function of the aminoacyl-tRNA binding site. In Stenotrophomonas maltophilia (strain K279a), this protein is Large ribosomal subunit protein bL19.